A 307-amino-acid chain; its full sequence is Protein rep (307 aa).

Residue Tyr219 coordinates DNA.

Belongs to the Gram-positive plasmids replication protein type 1 family.

This is Protein rep (repA) from Bacillus sp.